The following is a 363-amino-acid chain: Chorismate synthase (363 aa).

NADP(+) contacts are provided by R48 and R54. Residues 125 to 127 (RSS), 237 to 238 (NA), G277, 292 to 296 (KPTSS), and R318 contribute to the FMN site.

Belongs to the chorismate synthase family. As to quaternary structure, homotetramer. The cofactor is FMNH2.

The catalysed reaction is 5-O-(1-carboxyvinyl)-3-phosphoshikimate = chorismate + phosphate. Its pathway is metabolic intermediate biosynthesis; chorismate biosynthesis; chorismate from D-erythrose 4-phosphate and phosphoenolpyruvate: step 7/7. Catalyzes the anti-1,4-elimination of the C-3 phosphate and the C-6 proR hydrogen from 5-enolpyruvylshikimate-3-phosphate (EPSP) to yield chorismate, which is the branch point compound that serves as the starting substrate for the three terminal pathways of aromatic amino acid biosynthesis. This reaction introduces a second double bond into the aromatic ring system. This chain is Chorismate synthase, found in Pseudomonas putida (strain W619).